The following is a 219-amino-acid chain: Endo-type membrane-bound lytic murein transglycosylase A-like protein (219 aa).

The protein belongs to the transglycosylase Slt family.

The catalysed reaction is Endolytic cleavage of the (1-&gt;4)-beta-glycosidic linkage between N-acetylmuramic acid (MurNAc) and N-acetylglucosamine (GlcNAc) residues in peptidoglycan with concomitant formation of a 1,6-anhydrobond in the MurNAc residue.. Murein-degrading enzyme. May play a role in recycling of muropeptides during cell elongation and/or cell division (Potential). This Shigella flexneri protein is Endo-type membrane-bound lytic murein transglycosylase A-like protein.